The chain runs to 98 residues: uncharacterized protein (98 aa).

The protein belongs to the HesB/IscA family.

This is an uncharacterized protein from Staphylococcus aureus (strain USA300).